The primary structure comprises 158 residues: NAD(P)H-quinone oxidoreductase subunit J, chloroplastic (158 aa).

The protein belongs to the complex I 30 kDa subunit family. NDH is composed of at least 16 different subunits, 5 of which are encoded in the nucleus.

It is found in the plastid. The protein localises to the chloroplast thylakoid membrane. The enzyme catalyses a plastoquinone + NADH + (n+1) H(+)(in) = a plastoquinol + NAD(+) + n H(+)(out). The catalysed reaction is a plastoquinone + NADPH + (n+1) H(+)(in) = a plastoquinol + NADP(+) + n H(+)(out). Functionally, NDH shuttles electrons from NAD(P)H:plastoquinone, via FMN and iron-sulfur (Fe-S) centers, to quinones in the photosynthetic chain and possibly in a chloroplast respiratory chain. The immediate electron acceptor for the enzyme in this species is believed to be plastoquinone. Couples the redox reaction to proton translocation, and thus conserves the redox energy in a proton gradient. The polypeptide is NAD(P)H-quinone oxidoreductase subunit J, chloroplastic (Drimys granadensis).